Here is an 81-residue protein sequence, read N- to C-terminus: Large ribosomal subunit protein bL31B (81 aa).

Belongs to the bacterial ribosomal protein bL31 family. Type B subfamily. As to quaternary structure, part of the 50S ribosomal subunit.

The protein is Large ribosomal subunit protein bL31B (rpmE2) of Lactiplantibacillus plantarum (strain ATCC BAA-793 / NCIMB 8826 / WCFS1) (Lactobacillus plantarum).